Consider the following 74-residue polypeptide: Protein kish-B (74 aa).

Residues 1–22 (MTNVYSLDGILVFGLLFVCTCA) form the signal peptide. Residues 23–52 (YFKKVPRLKTWLLSEKKGVWGVFYKAAVIG) lie on the Extracellular side of the membrane. A helical transmembrane segment spans residues 53 to 73 (TRLHAAVAIACIVMAFYVLFI). K74 is a topological domain (cytoplasmic).

It belongs to the KISH family.

Its subcellular location is the golgi apparatus membrane. Its function is as follows. Involved in the early part of the secretory pathway. The polypeptide is Protein kish-B (TMEM167B) (Bos taurus (Bovine)).